The following is a 108-amino-acid chain: MSNQQKQLQLPSASIKKPKEKQKSQIVRIIQSKFKDYQYMFLLIKLSTYSKFDQDDDFNTFLSFLESEYKFSKQLSSKEIVLSLRYTKNTKITPYINHSKFETEKKIS.

Over residues 1 to 12 (MSNQQKQLQLPS) the composition is skewed to polar residues. The segment at 1-22 (MSNQQKQLQLPSASIKKPKEKQ) is disordered.

This is an uncharacterized protein from Dictyostelium discoideum (Social amoeba).